We begin with the raw amino-acid sequence, 854 residues long: Translation initiation factor IF-2 (854 aa).

The span at 61 to 72 shows a compositional bias: basic residues; the sequence is KNIKTPTAKKPK. 2 disordered regions span residues 61–115 and 167–186; these read KNIK…LASA and ESLK…KKES. Over residues 73-108 the composition is skewed to basic and acidic residues; the sequence is KENAKDQEKLNESEKKEPKKEESKEQEKQEIIDTHK. The tr-type G domain maps to 353–520; it reads TRAPVITIMG…IVLLQADILE (168 aa). Residues 362–369 are G1; sequence GHVDHGKT. Position 362–369 (362–369) interacts with GTP; the sequence is GHVDHGKT. Positions 387 to 391 are G2; sequence GITQH. Residues 408-411 are G3; it reads DTPG. Residues 408 to 412 and 462 to 465 each bind GTP; these read DTPGH and NKMD. The segment at 462–465 is G4; the sequence is NKMD. Residues 498–500 form a G5 region; sequence SAK.

This sequence belongs to the TRAFAC class translation factor GTPase superfamily. Classic translation factor GTPase family. IF-2 subfamily.

Its subcellular location is the cytoplasm. Functionally, one of the essential components for the initiation of protein synthesis. Protects formylmethionyl-tRNA from spontaneous hydrolysis and promotes its binding to the 30S ribosomal subunits. Also involved in the hydrolysis of GTP during the formation of the 70S ribosomal complex. The chain is Translation initiation factor IF-2 from Campylobacter jejuni subsp. doylei (strain ATCC BAA-1458 / RM4099 / 269.97).